The primary structure comprises 525 residues: FNIP repeat-containing protein DDB_G0274617 (525 aa).

One copy of the FNIP repeat lies at 65–107 (YQHEIKKEMLPSSIISIIFYNIKNILSSDSIPDTVKFLGFNGY).

In Dictyostelium discoideum (Social amoeba), this protein is FNIP repeat-containing protein DDB_G0274617.